We begin with the raw amino-acid sequence, 650 residues long: MSSQSLYKVSGNIAANALVNNDKYKTMYQESIVNPEGFWREHGKRIDWIKPYTKIKKTSFDDHNLSINWFYDGTLNASANCLDRHLAEHSDRVAIIWEGDNASEQRKITYGELHAEVCKFANALRSQGVRRGDIVTIYMPMVPEAAVAMLACARIGAVHSVVFGGFSPDSIASRVIDGKSKVIITSDEGMRGGRAIPLKRNIDDALKNPDVTTVEKVIVLKRTGGIVDWVEDRDVWWHSLMETASEYCQPEEMDAEAPLFLLYTSGSTGNPKGVLHTTGGYMVYASMTHEYVFDYKAGEVYWCTADVGWITGHSYMVYGPLANGATVLIHEGVPNHPSPARLGEMIDRHKVSILYTAPTLIRALMAEGKQHFDKFDGSSLRIMGSVGEPINPEAWRWYHEVIGHEHCPIVDTWWQTETGGILITPLPGATDTKPGSATRPFFGVQPALVDNMGNILEGENEGNLVLLDSWPGQMRTVYGDHERFVLTYFKTFRGMYFTGDGARRDEDGYYWITGRVDDVINVSGHRLGTAEVESALVSHELVAEAAVVGYPHDIKGQGIYAYVTLTRGTEETEELRQELRQWVRKEIGALATPDLIQWATGLPKTRSGKIMRRFLRKIAANEVTNLGDASTLADPAVIETLIESRLNRTE.

Residues 191–194 (RGGR), threonine 311, and asparagine 335 each bind CoA. ATP contacts are provided by residues 387–389 (GEP), 411–416 (DTWWQT), aspartate 500, and arginine 515. Serine 523 serves as a coordination point for CoA. Residue arginine 526 coordinates ATP. Mg(2+) is bound by residues valine 537, histidine 539, and valine 542. Arginine 584 is a CoA binding site. Lysine 609 bears the N6-acetyllysine mark.

The protein belongs to the ATP-dependent AMP-binding enzyme family. The cofactor is Mg(2+). Post-translationally, acetylated. Deacetylation by the SIR2-homolog deacetylase activates the enzyme.

The catalysed reaction is acetate + ATP + CoA = acetyl-CoA + AMP + diphosphate. Catalyzes the conversion of acetate into acetyl-CoA (AcCoA), an essential intermediate at the junction of anabolic and catabolic pathways. AcsA undergoes a two-step reaction. In the first half reaction, AcsA combines acetate with ATP to form acetyl-adenylate (AcAMP) intermediate. In the second half reaction, it can then transfer the acetyl group from AcAMP to the sulfhydryl group of CoA, forming the product AcCoA. This Shewanella baltica (strain OS195) protein is Acetyl-coenzyme A synthetase.